The chain runs to 1070 residues: DNA-directed RNA polymerase subunit beta (1070 aa).

This sequence belongs to the RNA polymerase beta chain family. In terms of assembly, in plastids the minimal PEP RNA polymerase catalytic core is composed of four subunits: alpha, beta, beta', and beta''. When a (nuclear-encoded) sigma factor is associated with the core the holoenzyme is formed, which can initiate transcription.

It is found in the plastid. Its subcellular location is the chloroplast. It catalyses the reaction RNA(n) + a ribonucleoside 5'-triphosphate = RNA(n+1) + diphosphate. DNA-dependent RNA polymerase catalyzes the transcription of DNA into RNA using the four ribonucleoside triphosphates as substrates. The chain is DNA-directed RNA polymerase subunit beta from Spinacia oleracea (Spinach).